The primary structure comprises 290 residues: 4-diphosphocytidyl-2-C-methyl-D-erythritol kinase (290 aa).

The active site involves Lys-13. Residue 96-106 coordinates ATP; sequence PMGGGIGGGSS. Asp-138 is a catalytic residue.

It belongs to the GHMP kinase family. IspE subfamily.

It catalyses the reaction 4-CDP-2-C-methyl-D-erythritol + ATP = 4-CDP-2-C-methyl-D-erythritol 2-phosphate + ADP + H(+). The protein operates within isoprenoid biosynthesis; isopentenyl diphosphate biosynthesis via DXP pathway; isopentenyl diphosphate from 1-deoxy-D-xylulose 5-phosphate: step 3/6. Catalyzes the phosphorylation of the position 2 hydroxy group of 4-diphosphocytidyl-2C-methyl-D-erythritol. In Vibrio vulnificus (strain CMCP6), this protein is 4-diphosphocytidyl-2-C-methyl-D-erythritol kinase.